A 286-amino-acid polypeptide reads, in one-letter code: Shikimate dehydrogenase (NADP(+)) (286 aa).

Residues 20–22 (SLS) and serine 67 contribute to the shikimate site. Catalysis depends on lysine 71, which acts as the Proton acceptor. Shikimate is bound by residues asparagine 92 and aspartate 107. NADP(+) contacts are provided by residues 131–135 (GGGGA) and alanine 230. Residue tyrosine 232 participates in shikimate binding. Glycine 253 is a binding site for NADP(+).

This sequence belongs to the shikimate dehydrogenase family. Homodimer.

It carries out the reaction shikimate + NADP(+) = 3-dehydroshikimate + NADPH + H(+). It participates in metabolic intermediate biosynthesis; chorismate biosynthesis; chorismate from D-erythrose 4-phosphate and phosphoenolpyruvate: step 4/7. In terms of biological role, involved in the biosynthesis of the chorismate, which leads to the biosynthesis of aromatic amino acids. Catalyzes the reversible NADPH linked reduction of 3-dehydroshikimate (DHSA) to yield shikimate (SA). The chain is Shikimate dehydrogenase (NADP(+)) from Lactococcus lactis subsp. cremoris (strain MG1363).